A 247-amino-acid chain; its full sequence is Phycobilisome rod-core linker polypeptide CpcG2 (247 aa).

In terms of domain architecture, PBS-linker spans 11-189; sequence SSQNQRVPGY…YWRDKLESER (179 aa). A disordered region spans residues 223 to 247; sequence PDTTRNTTPTGIPISVNPSANFPVR.

This sequence belongs to the phycobilisome linker protein family. Part of the phycobilisome, a hemidiscoidal structure that is composed of two distinct substructures: a core complex and a number of rods radiating from the core.

Its subcellular location is the cellular thylakoid membrane. Its function is as follows. Rod-core linker protein required for attachment of phycocyanin to allophycocyanin in cores of phycobilisomes. Linker polypeptides determine the state of aggregation and the location of the disk-shaped phycobiliprotein units within the phycobilisome and modulate their spectroscopic properties in order to mediate a directed and optimal energy transfer. The polypeptide is Phycobilisome rod-core linker polypeptide CpcG2 (Nostoc sp. (strain PCC 7120 / SAG 25.82 / UTEX 2576)).